The following is a 209-amino-acid chain: Ribosomal RNA large subunit methyltransferase E (209 aa).

5 residues coordinate S-adenosyl-L-methionine: G63, W65, D83, D99, and D124. K164 serves as the catalytic Proton acceptor.

The protein belongs to the class I-like SAM-binding methyltransferase superfamily. RNA methyltransferase RlmE family.

Its subcellular location is the cytoplasm. The enzyme catalyses uridine(2552) in 23S rRNA + S-adenosyl-L-methionine = 2'-O-methyluridine(2552) in 23S rRNA + S-adenosyl-L-homocysteine + H(+). Its function is as follows. Specifically methylates the uridine in position 2552 of 23S rRNA at the 2'-O position of the ribose in the fully assembled 50S ribosomal subunit. This is Ribosomal RNA large subunit methyltransferase E from Buchnera aphidicola subsp. Cinara cedri (strain Cc).